The following is a 166-amino-acid chain: Sec-independent protein translocase protein TatB (166 aa).

The helical transmembrane segment at 2–22 threads the bilayer; that stretch reads FDGIGFMELLLIGVLGLVVLG. Residues 69–166 form a disordered region; that stretch reads SKGLSNLSPE…DTRSNPKANG (98 aa). 2 stretches are compositionally biased toward polar residues: residues 88-97 and 112-132; these read QAAQSVNRPY and QIHS…SQAN. Over residues 133–153 the composition is skewed to low complexity; the sequence is PTATVEASPTSASPATPSEPS. The span at 155–166 shows a compositional bias: polar residues; that stretch reads GADTRSNPKANG.

Belongs to the TatB family. The Tat system comprises two distinct complexes: a TatABC complex, containing multiple copies of TatA, TatB and TatC subunits, and a separate TatA complex, containing only TatA subunits. Substrates initially bind to the TatABC complex, which probably triggers association of the separate TatA complex to form the active translocon.

It localises to the cell inner membrane. Functionally, part of the twin-arginine translocation (Tat) system that transports large folded proteins containing a characteristic twin-arginine motif in their signal peptide across membranes. Together with TatC, TatB is part of a receptor directly interacting with Tat signal peptides. TatB may form an oligomeric binding site that transiently accommodates folded Tat precursor proteins before their translocation. The sequence is that of Sec-independent protein translocase protein TatB from Shewanella baltica (strain OS223).